The sequence spans 190 residues: Protein LZIC (190 aa).

The stretch at 2–63 (ASRGKTETSK…SEFNDSLKKI (62 aa)) forms a coiled coil.

It belongs to the CTNNBIP1 family. Does not interact with CTNNB1.

In Rattus norvegicus (Rat), this protein is Protein LZIC (Lzic).